The primary structure comprises 299 residues: Coenzyme PQQ synthesis protein B (299 aa).

This sequence belongs to the PqqB family.

It participates in cofactor biosynthesis; pyrroloquinoline quinone biosynthesis. May be involved in the transport of PQQ or its precursor to the periplasm. This is Coenzyme PQQ synthesis protein B from Methylorubrum extorquens (strain ATCC 14718 / DSM 1338 / JCM 2805 / NCIMB 9133 / AM1) (Methylobacterium extorquens).